We begin with the raw amino-acid sequence, 192 residues long: Nucleoside triphosphate pyrophosphatase (192 aa).

The active-site Proton acceptor is the Asp73.

It belongs to the Maf family. A divalent metal cation is required as a cofactor.

It is found in the cytoplasm. The catalysed reaction is a ribonucleoside 5'-triphosphate + H2O = a ribonucleoside 5'-phosphate + diphosphate + H(+). It carries out the reaction a 2'-deoxyribonucleoside 5'-triphosphate + H2O = a 2'-deoxyribonucleoside 5'-phosphate + diphosphate + H(+). Nucleoside triphosphate pyrophosphatase. May have a dual role in cell division arrest and in preventing the incorporation of modified nucleotides into cellular nucleic acids. The chain is Nucleoside triphosphate pyrophosphatase from Ehrlichia ruminantium (strain Welgevonden).